A 233-amino-acid chain; its full sequence is ATP synthase subunit a (233 aa).

A run of 5 helical transmembrane segments spans residues 29–49 (FKHV…GLIV), 86–106 (VFPL…LGLV), 118–135 (TNAA…YQGL), 188–208 (VLFF…LFLL), and 209–229 (GKVL…KGAF).

It belongs to the ATPase A chain family. In terms of assembly, F-type ATPases have 2 components, CF(1) - the catalytic core - and CF(0) - the membrane proton channel. CF(1) has five subunits: alpha(3), beta(3), gamma(1), delta(1), epsilon(1). CF(0) has three main subunits: a(1), b(2) and c(9-12). The alpha and beta chains form an alternating ring which encloses part of the gamma chain. CF(1) is attached to CF(0) by a central stalk formed by the gamma and epsilon chains, while a peripheral stalk is formed by the delta and b chains.

It localises to the cell inner membrane. Functionally, key component of the proton channel; it plays a direct role in the translocation of protons across the membrane. This Nitratidesulfovibrio vulgaris (strain ATCC 29579 / DSM 644 / CCUG 34227 / NCIMB 8303 / VKM B-1760 / Hildenborough) (Desulfovibrio vulgaris) protein is ATP synthase subunit a.